Reading from the N-terminus, the 831-residue chain is SID1 transmembrane family member 1 (831 aa).

Positions 1–19 (MLDCPRLALLCALPWLLRA) are cleaved as a signal peptide. The Extracellular portion of the chain corresponds to 20 to 308 (AVPGHRAEPL…SVKGSVYVKS (289 aa)). N-linked (GlcNAc...) asparagine glycosylation is found at Asn67, Asn83, Asn136, and Asn281. Residues 309 to 329 (SLFSVFVFLSFYLGCLLVVFV) traverse the membrane as a helical segment. The Cytoplasmic portion of the chain corresponds to 330–441 (HHMRFQRKPV…DRRIVSKKYK (112 aa)). The interval 354–408 (VSHPITASTPEGSNYGAIDESSSSPGRQMSSSDGGQPCHSDTDSSVEESDFDTMP) is disordered. Residues 374–385 (SSSSPGRQMSSS) are compositionally biased toward low complexity. Acidic residues predominate over residues 397 to 408 (SSVEESDFDTMP). Residues 442-462 (IYFWNIITIAVFYALPVMQLV) form a helical membrane-spanning segment. Over 463–493 (ITYQTVVNVTGNQDICYYNFLCAHPLGVLSA) the chain is Extracellular. Asn470 carries an N-linked (GlcNAc...) asparagine glycan. The chain crosses the membrane as a helical span at residues 494–514 (FNNILSNLGHVLLGFLFLLIV). Over 515 to 540 (LRRDLLHRRALEAKDIFAMEYGIPKH) the chain is Cytoplasmic. Residues 541 to 561 (FGLFYAMGIALMMEGVLSACY) form a helical membrane-spanning segment. At 562-571 (HVCPNYSNFQ) the chain is on the extracellular side. Residue Asn566 is glycosylated (N-linked (GlcNAc...) asparagine). A helical membrane pass occupies residues 572–589 (FDTSFMYMIAGLCMLKLY). Topologically, residues 590 to 599 (QTRHPDINAS) are cytoplasmic. Residues 600–620 (AYSAYASFAVVITLTVLGVVF) traverse the membrane as a helical segment. Topologically, residues 621 to 625 (GKNDV) are extracellular. Residues 626–646 (WFWIIFSAIHVLASLALSTQI) form a helical membrane-spanning segment. The Cytoplasmic segment spans residues 647 to 687 (YYMGRFKIDVSDTDLGIFRRAAMVFYTDCIQQCSRPLYMDR). Residues 688-708 (MVLLIVGNLVNWSFALFGLIY) traverse the membrane as a helical segment. Over 709-714 (RPRDFA) the chain is Extracellular. The helical transmembrane segment at 715–735 (SYMLGIFICNLLLYLAFYIIM) threads the bilayer. At 736–745 (KLRSSEKVLP) the chain is on the cytoplasmic side. Residues 746–766 (LPVFCIVATAVVWAAALYFFF) form a helical membrane-spanning segment. Residues 767–795 (QNLSSWEGTPAESREKNRECVLLGFFDDH) are Extracellular-facing. N-linked (GlcNAc...) asparagine glycosylation occurs at Asn768. A helical membrane pass occupies residues 796–816 (DIWHFLSATALFFSFLVLLTL). Over 817-831 (DDDLDVVRRDQIPVF) the chain is Cytoplasmic.

This sequence belongs to the SID1 family.

It localises to the membrane. In vitro binds long double-stranded RNA (dsRNA) (500 and 700 base pairs), but not dsRNA shorter than 300 bp. Not involved in RNA autophagy, a process in which RNA is directly imported into lysosomes in an ATP-dependent manner, and degraded. This is SID1 transmembrane family member 1 (Sidt1) from Rattus norvegicus (Rat).